The primary structure comprises 861 residues: Homeobox-leucine zipper protein HOX29 (861 aa).

A DNA-binding region (homeobox) is located at residues 2-65 (DASKYVRYTP…NRRCREKQRK (64 aa)). Residues 57 to 99 (RRCREKQRKESSRLQALNRKLTAMNKLLMEENDRLQKQVSQLV) adopt a coiled-coil conformation. The region spanning 162 to 390 (RDASPAGLMS…VAHEDTRSVI (229 aa)) is the START domain.

Belongs to the HD-ZIP homeobox family. Class III subfamily. As to expression, expressed in roots, stems and leaf blades.

It is found in the nucleus. In terms of biological role, probable transcription factor. The protein is Homeobox-leucine zipper protein HOX29 (HOX29) of Oryza sativa subsp. indica (Rice).